A 286-amino-acid chain; its full sequence is Expansin-B4 (286 aa).

The signal sequence occupies residues 1 to 24 (MGSLSSLAAAAVFLSLLAVGHCAA). N-linked (GlcNAc...) asparagine glycans are attached at residues asparagine 28 and asparagine 44. The 107-residue stretch at 75–181 (GGACGFKHTN…TRVPCEFPGL (107 aa)) folds into the Expansin-like EG45 domain. Disulfide bonds link cysteine 78-cysteine 106, cysteine 109-cysteine 176, and cysteine 114-cysteine 120. The Expansin-like CBD domain occupies 194–281 (VYFAVLVEYE…NWRPNTFYRS (88 aa)). Asparagine 257 carries N-linked (GlcNAc...) asparagine glycosylation.

This sequence belongs to the expansin family. Expansin B subfamily. As to expression, expressed in internodes.

It is found in the secreted. The protein localises to the cell wall. The protein resides in the membrane. Its function is as follows. May cause loosening and extension of plant cell walls by disrupting non-covalent bonding between cellulose microfibrils and matrix glucans. No enzymatic activity has been found. May be required for rapid internodal elongation in deepwater rice during submergence. The chain is Expansin-B4 (EXPB4) from Oryza sativa subsp. japonica (Rice).